The following is a 185-amino-acid chain: Probable chorismate pyruvate-lyase (185 aa).

Substrate-binding residues include Arg75, Leu113, and Glu170.

It belongs to the UbiC family.

It is found in the cytoplasm. The catalysed reaction is chorismate = 4-hydroxybenzoate + pyruvate. Its pathway is cofactor biosynthesis; ubiquinone biosynthesis. Its function is as follows. Removes the pyruvyl group from chorismate, with concomitant aromatization of the ring, to provide 4-hydroxybenzoate (4HB) for the ubiquinone pathway. The polypeptide is Probable chorismate pyruvate-lyase (Coxiella burnetii (strain RSA 493 / Nine Mile phase I)).